We begin with the raw amino-acid sequence, 464 residues long: Cysteine--tRNA ligase (464 aa).

Cys-29 is a Zn(2+) binding site. A 'HIGH' region motif is present at residues 31-41; that stretch reads ATVQGDPHIGH. Zn(2+) contacts are provided by Cys-207, His-232, and Glu-236. A 'KMSKS' region motif is present at residues 263–267; it reads KMSKS. Lys-266 provides a ligand contact to ATP.

This sequence belongs to the class-I aminoacyl-tRNA synthetase family. Monomer. Zn(2+) serves as cofactor.

It localises to the cytoplasm. The catalysed reaction is tRNA(Cys) + L-cysteine + ATP = L-cysteinyl-tRNA(Cys) + AMP + diphosphate. The protein is Cysteine--tRNA ligase of Rhodococcus opacus (strain B4).